We begin with the raw amino-acid sequence, 96 residues long: Small ribosomal subunit protein bS16 (96 aa).

It belongs to the bacterial ribosomal protein bS16 family.

The polypeptide is Small ribosomal subunit protein bS16 (Oenococcus oeni (strain ATCC BAA-331 / PSU-1)).